A 203-amino-acid chain; its full sequence is ATP synthase subunit b (203 aa).

Residues 14 to 34 (FVWPLLGAGLLLAAEGVAWAS) traverse the membrane as a helical segment.

The protein belongs to the ATPase B chain family. F-type ATPases have 2 components, F(1) - the catalytic core - and F(0) - the membrane proton channel. F(1) has five subunits: alpha(3), beta(3), gamma(1), delta(1), epsilon(1). F(0) has three main subunits: a(1), b(2) and c(10-14). The alpha and beta chains form an alternating ring which encloses part of the gamma chain. F(1) is attached to F(0) by a central stalk formed by the gamma and epsilon chains, while a peripheral stalk is formed by the delta and b chains.

The protein localises to the cell inner membrane. F(1)F(0) ATP synthase produces ATP from ADP in the presence of a proton or sodium gradient. F-type ATPases consist of two structural domains, F(1) containing the extramembraneous catalytic core and F(0) containing the membrane proton channel, linked together by a central stalk and a peripheral stalk. During catalysis, ATP synthesis in the catalytic domain of F(1) is coupled via a rotary mechanism of the central stalk subunits to proton translocation. Its function is as follows. Component of the F(0) channel, it forms part of the peripheral stalk, linking F(1) to F(0). This chain is ATP synthase subunit b, found in Syntrophobacter fumaroxidans (strain DSM 10017 / MPOB).